Consider the following 637-residue polypeptide: MGLLSQGSPLSWEETQRHADHVRRHGILQFLHIYHAVKDRHKDVLKWGDEVEYMLVSFDHENRKVQLLLNGGDVLETLQEKGERTNPNHPTLWRPEYGSYMIEGTPGQPYGGTMSEFNTVEDNMRKRRKEATSVLGEHQALCTITSFPRLGCPGFTLPEHRPNPEEGGASKSLFFPDEAINKHPRFGTLTRNIRHRRGEKVVINVPIFKDKNTPSPFVETFPEDEEASKASKPDHIYMDAMGFGMGNCCLQVTFQACSISEARYLYDQLATICPIVMALSAASPFYRGYVSDIDCRWGVISASVDDRTREERGLEPLKNNRFKISKSRYDSIDSYLSKCGEKYNDIDLTIDTEIYEQLLEEGIDHLLAQHVAHLFIRDPLTLFEEKIHLDDANESDHFENIQSTNWQTMRFKPPPPNSDIGWRVEFRPMEVQLTDFENSAYVVFVVLLTRVILSYKLDFLIPLSKVDENMKVAQERDAVLQGMFYFRKDICKGGNAVVDGCSKAQTSSEPSAEEYTLMSIDTIINGKEGVFPGLIPILNSYLENMEVDVDTRCSILNYLKLIKKRASGELMTVARWMREFIANHPDYKQDSVITDEINYSLILKCNQIANELCECPELLGSGFRKAKYSGGKSDPSD.

At M1 the chain carries N-acetylmethionine. S5 and S8 each carry phosphoserine.

Belongs to the glutamate--cysteine ligase type 3 family. As to quaternary structure, heterodimer of a catalytic heavy chain and a regulatory light chain. As to expression, most abundant in kidney. Also found in liver and testis.

It carries out the reaction L-cysteine + L-glutamate + ATP = gamma-L-glutamyl-L-cysteine + ADP + phosphate + H(+). It catalyses the reaction (2S)-2-aminobutanoate + L-glutamate + ATP = gamma-L-glutamyl-(2S)-2-aminobutanoate + ADP + phosphate + H(+). The protein operates within sulfur metabolism; glutathione biosynthesis; glutathione from L-cysteine and L-glutamate: step 1/2. With respect to regulation, feedback inhibition by glutathione. Catalyzes the ATP-dependent ligation of L-glutamate and L-cysteine and participates in the first and rate-limiting step in glutathione biosynthesis. The polypeptide is Glutamate--cysteine ligase catalytic subunit (Rattus norvegicus (Rat)).